The chain runs to 351 residues: sn-1 oleoyl-lipid 12-desaturase (351 aa).

The tract at residues methionine 1–serine 20 is disordered. Transmembrane regions (helical) follow at residues alanine 44 to isoleucine 62 and phenylalanine 68 to glycine 88. The short motif at histidine 89–histidine 93 is the Histidine box-1 element. The chain crosses the membrane as a helical span at residues valine 100–serine 120. Positions histidine 125–histidine 129 match the Histidine box-2 motif. A run of 2 helical transmembrane segments spans residues leucine 199–tryptophan 219 and phenylalanine 221–leucine 241. Positions histidine 289–threonine 293 match the Histidine box-3 motif.

This sequence belongs to the fatty acid desaturase type 2 family. The cofactor is Fe(2+).

The protein resides in the cellular thylakoid membrane. The catalysed reaction is a 1-[(9Z)-octadecenoyl]-2-acyl-glycerolipid + 2 reduced [2Fe-2S]-[ferredoxin] + O2 + 2 H(+) = a 1-[(9Z,12Z)-octadecdienoyl]-2-acyl-glycerolipid + 2 oxidized [2Fe-2S]-[ferredoxin] + 2 H2O. Its pathway is lipid metabolism; polyunsaturated fatty acid biosynthesis. Its function is as follows. Desaturase involved in fatty acid biosynthesis. Introduces a double bond at carbon 12 of oleoyl groups (18:1) attached to the sn-1 position of the glycerol moiety of membrane glycerolipids. The polypeptide is sn-1 oleoyl-lipid 12-desaturase (Arthrospira platensis (Spirulina platensis)).